The sequence spans 935 residues: Isoleucine--tRNA ligase (935 aa).

A 'HIGH' region motif is present at residues P58–H68. E558 is an L-isoleucyl-5'-AMP binding site. The 'KMSKS' region motif lies at K599–S603. K602 serves as a coordination point for ATP. Residues C897, C900, C917, and C920 each contribute to the Zn(2+) site.

This sequence belongs to the class-I aminoacyl-tRNA synthetase family. IleS type 1 subfamily. In terms of assembly, monomer. Zn(2+) is required as a cofactor.

The protein resides in the cytoplasm. The enzyme catalyses tRNA(Ile) + L-isoleucine + ATP = L-isoleucyl-tRNA(Ile) + AMP + diphosphate. Catalyzes the attachment of isoleucine to tRNA(Ile). As IleRS can inadvertently accommodate and process structurally similar amino acids such as valine, to avoid such errors it has two additional distinct tRNA(Ile)-dependent editing activities. One activity is designated as 'pretransfer' editing and involves the hydrolysis of activated Val-AMP. The other activity is designated 'posttransfer' editing and involves deacylation of mischarged Val-tRNA(Ile). This Francisella tularensis subsp. holarctica (strain OSU18) protein is Isoleucine--tRNA ligase.